A 304-amino-acid polypeptide reads, in one-letter code: MLKNNSVISINDLSDEDLNLIFNTADSMAGNLKNGSQIKTMSGRIMATLFFEPSTRTRLSFESAMQRLGGSVISMADSKSSSTAKGETLADTTRMVSSYSDIIVVRHPLEGAARLVQKFSSRPVINAGDGSGEHPTQTLVDLYTIKKSFGDINNLEISIIGDLRYGRTVHSLLLALSRYNVRINLVSPDLLRLPGHVMSRLKNIKINEYNDLNNVIESSDVFYVTRIQRERFTDKNDYNKVIGTYGITEKDTEKMKENAIIMHPLPRVDEISSSVDNTKNAKYFIQAANGIPVRMALISLILGD.

Arg56 and Thr57 together coordinate carbamoyl phosphate. Residue Lys85 coordinates L-aspartate. Carbamoyl phosphate-binding residues include Arg106, His134, and Gln137. 2 residues coordinate L-aspartate: Arg167 and Arg226. Carbamoyl phosphate is bound by residues Leu265 and Pro266.

The protein belongs to the aspartate/ornithine carbamoyltransferase superfamily. ATCase family. Heterooligomer of catalytic and regulatory chains.

It carries out the reaction carbamoyl phosphate + L-aspartate = N-carbamoyl-L-aspartate + phosphate + H(+). It participates in pyrimidine metabolism; UMP biosynthesis via de novo pathway; (S)-dihydroorotate from bicarbonate: step 2/3. Catalyzes the condensation of carbamoyl phosphate and aspartate to form carbamoyl aspartate and inorganic phosphate, the committed step in the de novo pyrimidine nucleotide biosynthesis pathway. The polypeptide is Aspartate carbamoyltransferase catalytic subunit (Picrophilus torridus (strain ATCC 700027 / DSM 9790 / JCM 10055 / NBRC 100828 / KAW 2/3)).